Here is a 344-residue protein sequence, read N- to C-terminus: Trace amine-associated receptor 8a (344 aa).

Topologically, residues 1–33 are extracellular; it reads MTSNFSQAPLQLCYENVNASCIKTPYSPGLRVL. N-linked (GlcNAc...) asparagine glycans are attached at residues asparagine 4 and asparagine 18. Disulfide bonds link cysteine 21–cysteine 185 and cysteine 96–cysteine 189. The helical transmembrane segment at 34 to 54 threads the bilayer; it reads LYMVFGFGAVLAVCGNLLVVI. The Cytoplasmic portion of the chain corresponds to 55–67; it reads SVLHFKQLHSPAN. The helical transmembrane segment at 68-88 threads the bilayer; that stretch reads FLIASLASADFLVGISVMPFS. The Extracellular portion of the chain corresponds to 89 to 102; that stretch reads MVRSIESCWYFGDT. Residues 103 to 127 form a helical membrane-spanning segment; sequence FCSLHSCCDAAFCYSSLFHLCFISV. The Cytoplasmic segment spans residues 128–146; the sequence is DRYIAVTDPLVYPTKFTVS. The helical transmembrane segment at 147 to 167 threads the bilayer; the sequence is VSGICISISWILPLVYSSAVF. The Extracellular segment spans residues 168–196; the sequence is YTGISATGIENLVSALNCVGGCQIVVNQD. A helical transmembrane segment spans residues 197–217; it reads WVLIDFLLFLIPTLVMIILYS. Over 218–260 the chain is Cytoplasmic; it reads KIFLVAKQQAVKIETSISGSKGESSLESHKARVAKRERKAAKT. Residues 261–281 form a helical membrane-spanning segment; that stretch reads LGVTVVAFMVSWLPYTIDTLI. The Extracellular portion of the chain corresponds to 282–291; it reads DAFMGFITPA. A helical membrane pass occupies residues 292–314; it reads YVYEICCWSAYYNSAMNPLIYAF. At 315–344 the chain is on the cytoplasmic side; sequence FYPWFRKAIKLILSGEILKSHSSTMSLFSE.

Belongs to the G-protein coupled receptor 1 family.

The protein localises to the cell membrane. In terms of biological role, olfactory receptor activated by trace amines. Trace amine compounds are enriched in animal body fluids and act on trace amine-associated receptors (TAARs) to elicit both intraspecific and interspecific innate behaviors. Ligand-binding causes a conformation change that triggers signaling via G(s)-class of G alpha proteins (GNAL or GNAS). The sequence is that of Trace amine-associated receptor 8a from Rattus norvegicus (Rat).